Reading from the N-terminus, the 226-residue chain is ATP synthase F(0) complex subunit a (226 aa).

A run of 6 helical transmembrane segments spans residues 5–25, 68–88, 97–117, 136–156, 179–199, and 201–221; these read LFAP…LIII, WSLM…LGML, QLSM…ATGF, FLIP…PVAL, LVLM…LALL, and ILEF…VSLY.

This sequence belongs to the ATPase A chain family. As to quaternary structure, component of the ATP synthase complex composed at least of ATP5F1A/subunit alpha, ATP5F1B/subunit beta, ATP5MC1/subunit c (homooctomer), MT-ATP6/subunit a, MT-ATP8/subunit 8, ATP5ME/subunit e, ATP5MF/subunit f, ATP5MG/subunit g, ATP5MK/subunit k, ATP5MJ/subunit j, ATP5F1C/subunit gamma, ATP5F1D/subunit delta, ATP5F1E/subunit epsilon, ATP5PF/subunit F6, ATP5PB/subunit b, ATP5PD/subunit d, ATP5PO/subunit OSCP. ATP synthase complex consists of a soluble F(1) head domain (subunits alpha(3) and beta(3)) - the catalytic core - and a membrane F(0) domain - the membrane proton channel (subunits c, a, 8, e, f, g, k and j). These two domains are linked by a central stalk (subunits gamma, delta, and epsilon) rotating inside the F1 region and a stationary peripheral stalk (subunits F6, b, d, and OSCP). Interacts with DNAJC30; interaction is direct.

Its subcellular location is the mitochondrion inner membrane. It catalyses the reaction H(+)(in) = H(+)(out). In terms of biological role, subunit a, of the mitochondrial membrane ATP synthase complex (F(1)F(0) ATP synthase or Complex V) that produces ATP from ADP in the presence of a proton gradient across the membrane which is generated by electron transport complexes of the respiratory chain. ATP synthase complex consist of a soluble F(1) head domain - the catalytic core - and a membrane F(1) domain - the membrane proton channel. These two domains are linked by a central stalk rotating inside the F(1) region and a stationary peripheral stalk. During catalysis, ATP synthesis in the catalytic domain of F(1) is coupled via a rotary mechanism of the central stalk subunits to proton translocation. With the subunit c (ATP5MC1), forms the proton-conducting channel in the F(0) domain, that contains two crucial half-channels (inlet and outlet) that facilitate proton movement from the mitochondrial intermembrane space (IMS) into the matrix. Protons are taken up via the inlet half-channel and released through the outlet half-channel, following a Grotthuss mechanism. The protein is ATP synthase F(0) complex subunit a of Balaenoptera musculus (Blue whale).